A 300-amino-acid chain; its full sequence is Protoheme IX farnesyltransferase (300 aa).

9 consecutive transmembrane segments (helical) span residues 21–43, 45–65, 94–114, 117–137, 145–167, 171–193, 213–233, 235–255, and 272–292; these read PRVVELLLLTTVPTMILAQRGVP, PLSVLSVLLGGAMSAGAAGAF, ASLIFAWMLCVISVLWFLLFV, LSALLSAIAVFLYAFFYSIVL, IVWGGLAGCMPVLIAWAAVTGSI, AIVLFAVVFLWTPPHYWPLSIHY, LVVLQVLLYAFAVVACTLLLI, VAHMTPLYGLFSAVLGAWFVY, and AMHIFSLSNTYLSLVFLSVGI.

Belongs to the UbiA prenyltransferase family. Protoheme IX farnesyltransferase subfamily.

It is found in the cell membrane. The catalysed reaction is heme b + (2E,6E)-farnesyl diphosphate + H2O = Fe(II)-heme o + diphosphate. It functions in the pathway porphyrin-containing compound metabolism; heme O biosynthesis; heme O from protoheme: step 1/1. Its function is as follows. Converts heme B (protoheme IX) to heme O by substitution of the vinyl group on carbon 2 of heme B porphyrin ring with a hydroxyethyl farnesyl side group. This is Protoheme IX farnesyltransferase from Tropheryma whipplei (strain TW08/27) (Whipple's bacillus).